The primary structure comprises 449 residues: N-succinylarginine dihydrolase (449 aa).

Residues 19 to 28 (GGLSYGNVAS), asparagine 110, and 137 to 138 (HR) contribute to the substrate site. The disordered stretch occupies residues 23–43 (YGNVASQSNSQQGSNPREAAR). Positions 25–37 (NVASQSNSQQGSN) are enriched in polar residues. The active site involves glutamate 174. Position 214 (arginine 214) interacts with substrate. Histidine 250 is a catalytic residue. Aspartate 252 and asparagine 365 together coordinate substrate. The active-site Nucleophile is the cysteine 371.

Belongs to the succinylarginine dihydrolase family. In terms of assembly, homodimer.

The catalysed reaction is N(2)-succinyl-L-arginine + 2 H2O + 2 H(+) = N(2)-succinyl-L-ornithine + 2 NH4(+) + CO2. Its pathway is amino-acid degradation; L-arginine degradation via AST pathway; L-glutamate and succinate from L-arginine: step 2/5. Its function is as follows. Catalyzes the hydrolysis of N(2)-succinylarginine into N(2)-succinylornithine, ammonia and CO(2). In Pseudomonas entomophila (strain L48), this protein is N-succinylarginine dihydrolase.